The following is a 21-amino-acid chain: Cardiotoxin-like basic polypeptide ah (21 aa).

The protein belongs to the three-finger toxin family. Short-chain subfamily. Orphan group XV sub-subfamily. Contains 4 disulfide bonds. Expressed by the venom gland.

The protein resides in the secreted. It is found in the target cell membrane. Functionally, has hemolytic activity under low-lecithin conditions. Has low cytotoxic activity. Inhibits the expression of VEGF and bFGF in human non-small-cell lung cancer cell line NCI-H1299 in a dose-dependent manner. This is Cardiotoxin-like basic polypeptide ah from Naja atra (Chinese cobra).